The primary structure comprises 102 residues: Acid shock protein (102 aa).

The first 21 residues, 1 to 21 (MKKVLALVVAAAMGLSSAAFA), serve as a signal peptide directing secretion. Over residues 22-41 (AETATTPAPTATTTKAAPAK) the composition is skewed to low complexity. Residues 22–58 (AETATTPAPTATTTKAAPAKTTHHKKQHKAAPAQKAQ) constitute a propeptide that is removed on maturation. A disordered region spans residues 22–102 (AETATTPAPT…PAKPAAQPAA (81 aa)). Basic residues predominate over residues 80-90 (AAKKHARKHSH). Over residues 91-102 (QQPAKPAAQPAA) the composition is skewed to low complexity.

Belongs to the Asr family. Post-translationally, proteolytic processing gives rise to the active protein.

It localises to the periplasm. In terms of biological role, required for growth and/or survival at acidic conditions. In Escherichia coli O127:H6 (strain E2348/69 / EPEC), this protein is Acid shock protein.